Reading from the N-terminus, the 295-residue chain is Fructose-bisphosphate aldolase class 1 (295 aa).

E176 serves as the catalytic Proton acceptor. Catalysis depends on K213, which acts as the Schiff-base intermediate with dihydroxyacetone-P.

Belongs to the class I fructose-bisphosphate aldolase family.

It catalyses the reaction beta-D-fructose 1,6-bisphosphate = D-glyceraldehyde 3-phosphate + dihydroxyacetone phosphate. It participates in carbohydrate degradation; glycolysis; D-glyceraldehyde 3-phosphate and glycerone phosphate from D-glucose: step 4/4. The polypeptide is Fructose-bisphosphate aldolase class 1 (Clostridium acetobutylicum (strain ATCC 824 / DSM 792 / JCM 1419 / IAM 19013 / LMG 5710 / NBRC 13948 / NRRL B-527 / VKM B-1787 / 2291 / W)).